The primary structure comprises 431 residues: Protein cereblon (431 aa).

Residues 1–36 (MGNQLQLLPENEEEEEDDMETEDRDGEDVEKPSIIN) form a disordered region. The span at 10–28 (ENEEEEEDDMETEDRDGED) shows a compositional bias: acidic residues. A Lon N-terminal domain is found at 69-309 (LPVLPHVALI…CELDIMDRCT (241 aa)). Residues 308–416 (CTSLCCKQCQ…LTRSALLPTI (109 aa)) form the CULT domain. 2 residues coordinate Zn(2+): Cys-313 and Cys-316. The (S)-thalidomide site is built by His-368, Trp-370, and Trp-376. Zn(2+)-binding residues include Cys-381 and Cys-384.

This sequence belongs to the CRBN family. Component of a DCX (DDB1-CUL4-X-box) protein ligase complex. Highly expressed in brain, head, vasculature otic vesicles and developing pectoral fins.

It localises to the cytoplasm. The protein localises to the nucleus. The protein operates within protein modification; protein ubiquitination. Functionally, substrate recognition component of a DCX (DDB1-CUL4-X-box) E3 protein ligase complex that mediates the ubiquitination and subsequent proteasomal degradation of target proteins, such as MEIS2. Normal degradation of key regulatory proteins is required for normal limb outgrowth and expression of the fibroblast growth factor FGF8. Maintains presynaptic glutamate release and consequently cognitive functions, such as memory and learning, by negatively regulating large-conductance calcium-activated potassium (BK) channels in excitatory neurons. Likely to function by regulating the assembly and neuronal surface expression of BK channels via its interaction with KCNT1. May also be involved in regulating anxiety-like behaviors via a BK channel-independent mechanism. The sequence is that of Protein cereblon (crbn) from Danio rerio (Zebrafish).